The chain runs to 263 residues: Probable ribosomal RNA small subunit methyltransferase A (263 aa).

S-adenosyl-L-methionine is bound by residues leucine 12, glycine 37, glutamate 58, aspartate 83, and asparagine 100.

It belongs to the class I-like SAM-binding methyltransferase superfamily. rRNA adenine N(6)-methyltransferase family. RsmA subfamily.

Its subcellular location is the cytoplasm. Its function is as follows. Specifically dimethylates two adjacent adenosines in the loop of a conserved hairpin near the 3'-end of 16S rRNA in the 30S particle. May play a critical role in biogenesis of 30S subunits. The sequence is that of Probable ribosomal RNA small subunit methyltransferase A from Methanococcus maripaludis (strain C5 / ATCC BAA-1333).